The primary structure comprises 315 residues: Porphobilinogen deaminase (315 aa).

At C241 the chain carries S-(dipyrrolylmethanemethyl)cysteine.

It belongs to the HMBS family. As to quaternary structure, monomer. Dipyrromethane is required as a cofactor.

It carries out the reaction 4 porphobilinogen + H2O = hydroxymethylbilane + 4 NH4(+). It functions in the pathway porphyrin-containing compound metabolism; protoporphyrin-IX biosynthesis; coproporphyrinogen-III from 5-aminolevulinate: step 2/4. Its function is as follows. Tetrapolymerization of the monopyrrole PBG into the hydroxymethylbilane pre-uroporphyrinogen in several discrete steps. This is Porphobilinogen deaminase from Nitratidesulfovibrio vulgaris (strain DP4) (Desulfovibrio vulgaris).